Reading from the N-terminus, the 136-residue chain is Single-stranded DNA-binding protein 1 (136 aa).

The 106-residue stretch at 4 to 109 (LNKMQLIGNL…IMAKEMQMLG (106 aa)) folds into the SSB domain. The tract at residues 109–136 (GKKQDNNKVGNARHGDALPADEDDYYDF) is disordered. The span at 127-136 (PADEDDYYDF) shows a compositional bias: acidic residues.

As to quaternary structure, homotetramer.

This chain is Single-stranded DNA-binding protein 1 (ssb1), found in Xylella fastidiosa (strain 9a5c).